A 283-amino-acid polypeptide reads, in one-letter code: MDKVIEMFSDYLAHVRRHSENTLKAYKKDVRKFLTYVGKQINNIERKDVEEFLKALSKGDITGESPRETTISRYISSLNSFFNYLELSGMIYENPMERIKHPRIRRKIPDFLTEDEVSSLIGAFNEENELRQKTAISLLYYAGLRISELCNLRTTDISFIPPFLRVEMGKGRKDRLVPLPDKVIPILKKYIDLENPKIFVFENGKKHVHPSTVFRWLKEGVKRANIKKDVHPHTLRHSYATHLIRKGVNIKVVQELLGHTNLSTTSIYLHVADQEKFDAVKKL.

The Core-binding (CB) domain occupies 1 to 86; the sequence is MDKVIEMFSD…SLNSFFNYLE (86 aa). In terms of domain architecture, Tyr recombinase spans 107–281; that stretch reads KIPDFLTEDE…ADQEKFDAVK (175 aa). Catalysis depends on residues Arg145, Lys170, His233, Arg236, and His259. Catalysis depends on Tyr268, which acts as the O-(3'-phospho-DNA)-tyrosine intermediate.

It belongs to the 'phage' integrase family.

The protein resides in the cytoplasm. Site-specific tyrosine recombinase, which acts by catalyzing the cutting and rejoining of the recombining DNA molecules. This Thermosipho africanus (strain TCF52B) protein is Tyrosine recombinase THA_404.